Consider the following 476-residue polypeptide: Bifunctional protein GlmU (476 aa).

The interval 1–235 (MTALDIIIMA…ALQVAGVNSP (235 aa)) is pyrophosphorylase. Residues Lys-23, Gln-81, 86–87 (GT), 108–110 (SGD), Gly-145, Glu-160, and Asn-233 contribute to the UDP-N-acetyl-alpha-D-glucosamine site. Asp-110 lines the Mg(2+) pocket. Asn-233 provides a ligand contact to Mg(2+). Residues 236–256 (AQLADLERAHQRAQAAALMEQ) are linker. The interval 257–476 (GVRLADPARF…WKRPAKQAKG (220 aa)) is N-acetyltransferase. UDP-N-acetyl-alpha-D-glucosamine contacts are provided by Arg-351 and Lys-369. His-381 acts as the Proton acceptor in catalysis. 2 residues coordinate UDP-N-acetyl-alpha-D-glucosamine: Tyr-384 and Asn-395. Acetyl-CoA-binding positions include Ala-398, 404–405 (NY), Ser-423, Gly-441, and Arg-458.

In the N-terminal section; belongs to the N-acetylglucosamine-1-phosphate uridyltransferase family. It in the C-terminal section; belongs to the transferase hexapeptide repeat family. In terms of assembly, homotrimer. It depends on Mg(2+) as a cofactor.

The protein localises to the cytoplasm. The enzyme catalyses alpha-D-glucosamine 1-phosphate + acetyl-CoA = N-acetyl-alpha-D-glucosamine 1-phosphate + CoA + H(+). The catalysed reaction is N-acetyl-alpha-D-glucosamine 1-phosphate + UTP + H(+) = UDP-N-acetyl-alpha-D-glucosamine + diphosphate. It participates in nucleotide-sugar biosynthesis; UDP-N-acetyl-alpha-D-glucosamine biosynthesis; N-acetyl-alpha-D-glucosamine 1-phosphate from alpha-D-glucosamine 6-phosphate (route II): step 2/2. Its pathway is nucleotide-sugar biosynthesis; UDP-N-acetyl-alpha-D-glucosamine biosynthesis; UDP-N-acetyl-alpha-D-glucosamine from N-acetyl-alpha-D-glucosamine 1-phosphate: step 1/1. It functions in the pathway bacterial outer membrane biogenesis; LPS lipid A biosynthesis. Functionally, catalyzes the last two sequential reactions in the de novo biosynthetic pathway for UDP-N-acetylglucosamine (UDP-GlcNAc). The C-terminal domain catalyzes the transfer of acetyl group from acetyl coenzyme A to glucosamine-1-phosphate (GlcN-1-P) to produce N-acetylglucosamine-1-phosphate (GlcNAc-1-P), which is converted into UDP-GlcNAc by the transfer of uridine 5-monophosphate (from uridine 5-triphosphate), a reaction catalyzed by the N-terminal domain. In Acidovorax sp. (strain JS42), this protein is Bifunctional protein GlmU.